The following is a 569-amino-acid chain: Cationic amino acid transporter 9, chloroplastic (569 aa).

A chloroplast-targeting transit peptide spans 1–41; that stretch reads MGGHEGFSNQRLSSATWFSHFRASALRSKSLPPPSSQTAVR. Helical transmembrane passes span 53-73, 81-101, 113-135, 155-175, 181-201, 215-235, 250-270, 284-304, 333-353, 406-428, 444-464, 467-487, 502-522, and 528-548; these read GLFDLILLGVGASIGAGVFVV, AGPGVTISFLLAGASCVLNAL, VVGGAYMYSYSAFNEITAFLVFV, YAVALLELFPALKGSIPLWMG, LGGLLSLNILAPILLALLTLV, VMTATKVVIVLVVICAGAFEI, AVLTGATVVFFSYVGFDAVAN, IGIMGSLLVCISLYIGVCLVL, ILISIGAVAGLTTTLLVGLYV, HILSVGTLTGYSVVAACVVALRL, WQEGVICLVIIACSGFGAGVF, FSASVIFILLSVGVAVVASAV, FSCPGVPIVPSVCIFFNIFLF, and EAWIRFVVVSVLATAVYALYG.

It belongs to the amino acid-polyamine-organocation (APC) superfamily. Cationic amino acid transporter (CAT) (TC 2.A.3.3) family. As to expression, expressed in roots, stems, flowers, and leaves.

The protein localises to the plastid. Its subcellular location is the chloroplast membrane. In terms of biological role, permease involved in the transport of the cationic amino acids. The sequence is that of Cationic amino acid transporter 9, chloroplastic (CAT9) from Arabidopsis thaliana (Mouse-ear cress).